The chain runs to 182 residues: Shikimate kinase (182 aa).

Gly-14–Thr-19 contributes to the ATP binding site. A Mg(2+)-binding site is contributed by Thr-18. Positions 36, 60, and 84 each coordinate substrate. Arg-122 contributes to the ATP binding site. Substrate is bound at residue Arg-141.

Belongs to the shikimate kinase family. In terms of assembly, monomer. Requires Mg(2+) as cofactor.

The protein resides in the cytoplasm. It catalyses the reaction shikimate + ATP = 3-phosphoshikimate + ADP + H(+). It functions in the pathway metabolic intermediate biosynthesis; chorismate biosynthesis; chorismate from D-erythrose 4-phosphate and phosphoenolpyruvate: step 5/7. In terms of biological role, catalyzes the specific phosphorylation of the 3-hydroxyl group of shikimic acid using ATP as a cosubstrate. The chain is Shikimate kinase from Marinomonas sp. (strain MWYL1).